The chain runs to 288 residues: Nucleotide-binding protein PM0169 (288 aa).

8 to 15 lines the ATP pocket; it reads GHSGAGKS. Position 56–59 (56–59) interacts with GTP; sequence DIRN.

It belongs to the RapZ-like family.

Its function is as follows. Displays ATPase and GTPase activities. This Pasteurella multocida (strain Pm70) protein is Nucleotide-binding protein PM0169.